A 376-amino-acid chain; its full sequence is 4-hydroxy-3-methylbut-2-en-1-yl diphosphate synthase (flavodoxin) (376 aa).

Residues Cys270, Cys273, Cys305, and Glu312 each contribute to the [4Fe-4S] cluster site.

Belongs to the IspG family. It depends on [4Fe-4S] cluster as a cofactor.

The enzyme catalyses (2E)-4-hydroxy-3-methylbut-2-enyl diphosphate + oxidized [flavodoxin] + H2O + 2 H(+) = 2-C-methyl-D-erythritol 2,4-cyclic diphosphate + reduced [flavodoxin]. It participates in isoprenoid biosynthesis; isopentenyl diphosphate biosynthesis via DXP pathway; isopentenyl diphosphate from 1-deoxy-D-xylulose 5-phosphate: step 5/6. Its function is as follows. Converts 2C-methyl-D-erythritol 2,4-cyclodiphosphate (ME-2,4cPP) into 1-hydroxy-2-methyl-2-(E)-butenyl 4-diphosphate. The protein is 4-hydroxy-3-methylbut-2-en-1-yl diphosphate synthase (flavodoxin) of Colwellia psychrerythraea (strain 34H / ATCC BAA-681) (Vibrio psychroerythus).